Reading from the N-terminus, the 290-residue chain is 4-hydroxybenzoate octaprenyltransferase (290 aa).

Transmembrane regions (helical) follow at residues 23 to 43, 46 to 66, 99 to 119, 141 to 161, 163 to 183, 212 to 232, 233 to 253, and 268 to 288; these read IGAL…TPGM, LWIL…GCVV, LFVV…AMTI, LPQV…FAAV, ESLP…AVAY, TLII…IGWL, NGLG…FVYQ, and AFMN…MSYW.

The protein belongs to the UbiA prenyltransferase family. Requires Mg(2+) as cofactor.

It is found in the cell inner membrane. It catalyses the reaction all-trans-octaprenyl diphosphate + 4-hydroxybenzoate = 4-hydroxy-3-(all-trans-octaprenyl)benzoate + diphosphate. The protein operates within cofactor biosynthesis; ubiquinone biosynthesis. Its function is as follows. Catalyzes the prenylation of para-hydroxybenzoate (PHB) with an all-trans polyprenyl group. Mediates the second step in the final reaction sequence of ubiquinone-8 (UQ-8) biosynthesis, which is the condensation of the polyisoprenoid side chain with PHB, generating the first membrane-bound Q intermediate 3-octaprenyl-4-hydroxybenzoate. This is 4-hydroxybenzoate octaprenyltransferase from Salmonella typhi.